Reading from the N-terminus, the 338-residue chain is MKRMIALDGAQGEGGGQILRSALSLSMITGQPFTITGIRAGRAKPGLLRQHLTAVKAAAEICRATVEGAELGSQRLVFRPGTVRGGDYRFAIGSAGSCTLVLQTVLPALWFADGPSRVEVSGGTDNPSAPPADFIRRVLEPLLAKIGVHQQTTLLRHGFYPAGGGVVATEVSPVASFNSLQLGERGNIVQMRGEVLLAGVPRHVAEREIATLAASFSLHEQAVHSLPRDQGPGNTVSLEVESENITERFFVVGEKRVSAEVVAAQLVKEVKRYLASPAAVGEYLADQLVLPMALAGTGEFTVAHPSCHLLTNIAVVERFLPVRFGLIETDGVTRVSIE.

Residues Q103 and 283–287 contribute to the ATP site; that span reads YLADQ. The Tele-AMP-histidine intermediate role is filled by H308.

This sequence belongs to the RNA 3'-terminal cyclase family. Type 1 subfamily.

It is found in the cytoplasm. It carries out the reaction a 3'-end 3'-phospho-ribonucleotide-RNA + ATP = a 3'-end 2',3'-cyclophospho-ribonucleotide-RNA + AMP + diphosphate. Catalyzes the conversion of 3'-phosphate to a 2',3'-cyclic phosphodiester at the end of RNA. The mechanism of action of the enzyme occurs in 3 steps: (A) adenylation of the enzyme by ATP; (B) transfer of adenylate to an RNA-N3'P to produce RNA-N3'PP5'A; (C) and attack of the adjacent 2'-hydroxyl on the 3'-phosphorus in the diester linkage to produce the cyclic end product. The biological role of this enzyme is unknown but it is likely to function in some aspects of cellular RNA processing. This Escherichia coli O6:K15:H31 (strain 536 / UPEC) protein is RNA 3'-terminal phosphate cyclase.